The sequence spans 306 residues: Bifunctional protein FolD (306 aa).

NADP(+) contacts are provided by residues 164–166, S189, and T230; that span reads GRS.

Belongs to the tetrahydrofolate dehydrogenase/cyclohydrolase family. As to quaternary structure, homodimer.

The catalysed reaction is (6R)-5,10-methylene-5,6,7,8-tetrahydrofolate + NADP(+) = (6R)-5,10-methenyltetrahydrofolate + NADPH. The enzyme catalyses (6R)-5,10-methenyltetrahydrofolate + H2O = (6R)-10-formyltetrahydrofolate + H(+). The protein operates within one-carbon metabolism; tetrahydrofolate interconversion. Its function is as follows. Catalyzes the oxidation of 5,10-methylenetetrahydrofolate to 5,10-methenyltetrahydrofolate and then the hydrolysis of 5,10-methenyltetrahydrofolate to 10-formyltetrahydrofolate. The sequence is that of Bifunctional protein FolD from Solibacter usitatus (strain Ellin6076).